Here is a 265-residue protein sequence, read N- to C-terminus: MSRLSTIFTQLPVGKKVFIPFITAGDSGLDNTFELMQVLVKNGADVIELGVPFSDPIADGPIIAKSHERAVADGVGLCDVLSLVKKFRQSNDTTAIVLMGYLNPIEAFGYQAFANAASESAVDGVLVVDMPPEEAHDLKRSLDDVNIDLIFLVALTTTDERLAFLATIASGFIYFISLKGVTGAEHLDVDLVKMYLLRVRKMINLPIGVGFGIKNAKSAKAVSKYADAVIVGSLLVAFVEQYANDRNKMLANVGYFADEISTAIK.

Catalysis depends on proton acceptor residues glutamate 48 and aspartate 59.

Belongs to the TrpA family. Tetramer of two alpha and two beta chains.

It carries out the reaction (1S,2R)-1-C-(indol-3-yl)glycerol 3-phosphate + L-serine = D-glyceraldehyde 3-phosphate + L-tryptophan + H2O. It functions in the pathway amino-acid biosynthesis; L-tryptophan biosynthesis; L-tryptophan from chorismate: step 5/5. Functionally, the alpha subunit is responsible for the aldol cleavage of indoleglycerol phosphate to indole and glyceraldehyde 3-phosphate. The chain is Tryptophan synthase alpha chain from Ruthia magnifica subsp. Calyptogena magnifica.